The following is a 274-amino-acid chain: Penicillin-insensitive murein endopeptidase (274 aa).

The signal sequence occupies residues 1–19 (MNKTAIALLALLASSVSLA). 3 disulfides stabilise this stretch: C44/C265, C187/C235, and C216/C223. 6 residues coordinate Zn(2+): H110, H113, D120, D147, H150, and H211. The tract at residues 227 to 274 (PLPPPGDGCGAELQSWFEPPKPGTTKPEKKTPPPLPPSCQALLDEHVI) is disordered.

The protein belongs to the peptidase M74 family. In terms of assembly, dimer. Zn(2+) is required as a cofactor.

It is found in the periplasm. Its function is as follows. Murein endopeptidase that cleaves the D-alanyl-meso-2,6-diamino-pimelyl amide bond that connects peptidoglycan strands. Likely plays a role in the removal of murein from the sacculus. The protein is Penicillin-insensitive murein endopeptidase of Shigella dysenteriae serotype 1 (strain Sd197).